We begin with the raw amino-acid sequence, 357 residues long: 4-hydroxy-3-methylbut-2-en-1-yl diphosphate synthase (flavodoxin) (357 aa).

[4Fe-4S] cluster contacts are provided by Cys264, Cys267, Cys299, and Glu306.

The protein belongs to the IspG family. It depends on [4Fe-4S] cluster as a cofactor.

The enzyme catalyses (2E)-4-hydroxy-3-methylbut-2-enyl diphosphate + oxidized [flavodoxin] + H2O + 2 H(+) = 2-C-methyl-D-erythritol 2,4-cyclic diphosphate + reduced [flavodoxin]. Its pathway is isoprenoid biosynthesis; isopentenyl diphosphate biosynthesis via DXP pathway; isopentenyl diphosphate from 1-deoxy-D-xylulose 5-phosphate: step 5/6. Converts 2C-methyl-D-erythritol 2,4-cyclodiphosphate (ME-2,4cPP) into 1-hydroxy-2-methyl-2-(E)-butenyl 4-diphosphate. The sequence is that of 4-hydroxy-3-methylbut-2-en-1-yl diphosphate synthase (flavodoxin) from Campylobacter jejuni (strain RM1221).